Consider the following 475-residue polypeptide: Glucose-6-phosphate 1-dehydrogenase gcd1 (475 aa).

Residues Arg42 and Lys146 each coordinate NADP(+). Residues Lys146, Glu214, and Asp233 each coordinate D-glucose 6-phosphate. The active-site Proton acceptor is the His238. A D-glucose 6-phosphate-binding site is contributed by Lys332. Positions 342 and 365 each coordinate NADP(+).

The protein belongs to the glucose-6-phosphate dehydrogenase family.

The protein resides in the cytoplasm. The catalysed reaction is D-glucose 6-phosphate + NADP(+) = 6-phospho-D-glucono-1,5-lactone + NADPH + H(+). The protein operates within carbohydrate degradation; pentose phosphate pathway; D-ribulose 5-phosphate from D-glucose 6-phosphate (oxidative stage): step 1/3. In terms of biological role, catalyzes the rate-limiting step of the oxidative pentose-phosphate pathway, which represents a route for the dissimilation of carbohydrates besides glycolysis. The main function of this enzyme is to provide reducing power (NADPH) and pentose phosphates for fatty acid and nucleic acid synthesis. This is Glucose-6-phosphate 1-dehydrogenase gcd1 from Schizosaccharomyces pombe (strain 972 / ATCC 24843) (Fission yeast).